Consider the following 270-residue polypeptide: tRNA (guanine-N(1)-)-methyltransferase (270 aa).

S-adenosyl-L-methionine contacts are provided by residues G113 and 133-138 (IGDYVL). A disordered region spans residues 251-270 (APTEGTGLIHHRDVEGPGEG). Over residues 260–270 (HHRDVEGPGEG) the composition is skewed to basic and acidic residues.

It belongs to the RNA methyltransferase TrmD family. As to quaternary structure, homodimer.

The protein localises to the cytoplasm. It catalyses the reaction guanosine(37) in tRNA + S-adenosyl-L-methionine = N(1)-methylguanosine(37) in tRNA + S-adenosyl-L-homocysteine + H(+). In terms of biological role, specifically methylates guanosine-37 in various tRNAs. This chain is tRNA (guanine-N(1)-)-methyltransferase, found in Frankia casuarinae (strain DSM 45818 / CECT 9043 / HFP020203 / CcI3).